A 100-amino-acid chain; its full sequence is Co-chaperonin GroES (100 aa).

This sequence belongs to the GroES chaperonin family. In terms of assembly, heptamer of 7 subunits arranged in a ring. Interacts with the chaperonin GroEL.

Its subcellular location is the cytoplasm. Its function is as follows. Together with the chaperonin GroEL, plays an essential role in assisting protein folding. The GroEL-GroES system forms a nano-cage that allows encapsulation of the non-native substrate proteins and provides a physical environment optimized to promote and accelerate protein folding. GroES binds to the apical surface of the GroEL ring, thereby capping the opening of the GroEL channel. This chain is Co-chaperonin GroES, found in Mycolicibacterium vanbaalenii (strain DSM 7251 / JCM 13017 / BCRC 16820 / KCTC 9966 / NRRL B-24157 / PYR-1) (Mycobacterium vanbaalenii).